The sequence spans 776 residues: DNA ligase (776 aa).

NAD(+) contacts are provided by residues 31–35 (DAEYD), 80–81 (SL), and glutamate 112. The N6-AMP-lysine intermediate role is filled by lysine 114. Residues arginine 135, glutamate 172, lysine 288, and lysine 312 each contribute to the NAD(+) site. Zn(2+) is bound by residues cysteine 406, cysteine 409, cysteine 436, and cysteine 442. The region spanning 693-776 (AEGLPLAGQT…TFLAEQGIAV (84 aa)) is the BRCT domain.

The protein belongs to the NAD-dependent DNA ligase family. LigA subfamily. Requires Mg(2+) as cofactor. Mn(2+) serves as cofactor.

It carries out the reaction NAD(+) + (deoxyribonucleotide)n-3'-hydroxyl + 5'-phospho-(deoxyribonucleotide)m = (deoxyribonucleotide)n+m + AMP + beta-nicotinamide D-nucleotide.. Its function is as follows. DNA ligase that catalyzes the formation of phosphodiester linkages between 5'-phosphoryl and 3'-hydroxyl groups in double-stranded DNA using NAD as a coenzyme and as the energy source for the reaction. It is essential for DNA replication and repair of damaged DNA. The polypeptide is DNA ligase (Pseudomonas putida (strain ATCC 700007 / DSM 6899 / JCM 31910 / BCRC 17059 / LMG 24140 / F1)).